The primary structure comprises 342 residues: GTPase Obg (342 aa).

In terms of domain architecture, Obg spans 1-159; sequence MQFIDQAKIE…KQLRLELKLL (159 aa). The OBG-type G domain occupies 160 to 330; that stretch reads AEVGIIGLPN…MLQEIWGILD (171 aa). GTP contacts are provided by residues 166–173, 191–195, 213–216, 280–283, and 311–313; these read GLPNAGKS, FTTLI, DIPG, NKID, and SAV. Residues Ser-173 and Thr-193 each contribute to the Mg(2+) site.

This sequence belongs to the TRAFAC class OBG-HflX-like GTPase superfamily. OBG GTPase family. Monomer. The cofactor is Mg(2+).

It localises to the cytoplasm. An essential GTPase which binds GTP, GDP and possibly (p)ppGpp with moderate affinity, with high nucleotide exchange rates and a fairly low GTP hydrolysis rate. Plays a role in control of the cell cycle, stress response, ribosome biogenesis and in those bacteria that undergo differentiation, in morphogenesis control. The protein is GTPase Obg of Nostoc punctiforme (strain ATCC 29133 / PCC 73102).